A 435-amino-acid chain; its full sequence is MTKKVTIIGAGLAGSEAAWQVANAGVPVDLYEMRPVKKTPAHQTENFAELVCSNSLRGNSLTNAVGVLKEEMRRLNSIIIGSADQTAVPAGGALAVDRDSFSETITEKIKSHPLITIKNEEITDIPEGIVIIATGPLTSESLSQKIQEFNGSEGFYFYDAAAPIIDKSTIDMDKVYLKSRYNKGEAAYLNCPMTEEEFNAFHEALVNAEVVPLRTFEKEKFFEGCMPIEVMAQRGIKTMLFGPMKPVGLEDPKTGKRPYAVIQLRQDNAAASLYNIVGFQTHLKWGEQKRVFRMIPGLENAEFVRYGVMHRNSFMNSPELLKPTYQSKKRDDLFFAGQMTGVEGYVESAASGLLAGINAARLAKGEEPIEFPRETTLGSMAYYITHAEGKHFQPMNANFGLFPELPERIRDKKERYEAIANRALDVQAQVIQSLD.

9 to 14 (GAGLAG) lines the FAD pocket.

Belongs to the MnmG family. TrmFO subfamily. Requires FAD as cofactor.

It is found in the cytoplasm. It carries out the reaction uridine(54) in tRNA + (6R)-5,10-methylene-5,6,7,8-tetrahydrofolate + NADH + H(+) = 5-methyluridine(54) in tRNA + (6S)-5,6,7,8-tetrahydrofolate + NAD(+). The enzyme catalyses uridine(54) in tRNA + (6R)-5,10-methylene-5,6,7,8-tetrahydrofolate + NADPH + H(+) = 5-methyluridine(54) in tRNA + (6S)-5,6,7,8-tetrahydrofolate + NADP(+). Its function is as follows. Catalyzes the folate-dependent formation of 5-methyl-uridine at position 54 (M-5-U54) in all tRNAs. The chain is Methylenetetrahydrofolate--tRNA-(uracil-5-)-methyltransferase TrmFO from Enterococcus faecalis (strain ATCC 700802 / V583).